Reading from the N-terminus, the 178-residue chain is Large ribosomal subunit protein uL6 (178 aa).

The disordered stretch occupies residues 159 to 178 (GKGIRYEGEHVRRKEGKTGK).

This sequence belongs to the universal ribosomal protein uL6 family. In terms of assembly, part of the 50S ribosomal subunit.

Functionally, this protein binds to the 23S rRNA, and is important in its secondary structure. It is located near the subunit interface in the base of the L7/L12 stalk, and near the tRNA binding site of the peptidyltransferase center. The polypeptide is Large ribosomal subunit protein uL6 (Listeria monocytogenes serotype 4b (strain CLIP80459)).